The sequence spans 137 residues: Small ribosomal subunit protein uS12 (137 aa).

The interval 1-55 (MPTINQLVRKPRKSKVEKSDSPALNKGYNSFKKTQTNVNSPQKRGVCTRVGTMTP) is disordered. Polar residues predominate over residues 27-42 (GYNSFKKTQTNVNSPQ). Asp-102 carries the 3-methylthioaspartic acid modification.

Belongs to the universal ribosomal protein uS12 family. As to quaternary structure, part of the 30S ribosomal subunit. Contacts proteins S8 and S17. May interact with IF1 in the 30S initiation complex.

Functionally, with S4 and S5 plays an important role in translational accuracy. Its function is as follows. Interacts with and stabilizes bases of the 16S rRNA that are involved in tRNA selection in the A site and with the mRNA backbone. Located at the interface of the 30S and 50S subunits, it traverses the body of the 30S subunit contacting proteins on the other side and probably holding the rRNA structure together. The combined cluster of proteins S8, S12 and S17 appears to hold together the shoulder and platform of the 30S subunit. The protein is Small ribosomal subunit protein uS12 of Enterococcus faecalis (strain ATCC 700802 / V583).